We begin with the raw amino-acid sequence, 416 residues long: MAYFLEQSDSEIFELIFEEYKRQNEHLEMIASENYTFPSVMEAMGSILTNKYAEGYPNKRYYGGCEVVDKIESLAIERAKKLFNCQFANVQAHSGSQANNAVYHALLKPYDKILGMDLSCGGHLTHGAKVSLTGKHYQSFSYGVNLDGYIDYEEALKIAQSVKPEIIVCGFSAYPREIDFKKFREIADEVGALLLGDIAHVAGLVVTGEHAHPFPHCHVVSSTTHKTLRGPRGGLILTNDEEIAAKIDKAIFPGTQGGPLMHVIAAKAVGFKENLKPEFKAYAKLVKSNMQVLAKALKEKNHKLVSGGTSNHLLLMDFLDKPYSGKDADIALGNAGITVNKNTIPGETRNPFVTSGIRIGSAALSARGMGAKEFEIIGNKISDILNDINNVSLQLHVKEELKAMANQFPVYQQPIF.

Residues leucine 118 and 122-124 (GHL) each bind (6S)-5,6,7,8-tetrahydrofolate. The residue at position 226 (lysine 226) is an N6-(pyridoxal phosphate)lysine. Glutamate 242 serves as a coordination point for (6S)-5,6,7,8-tetrahydrofolate.

This sequence belongs to the SHMT family. Homodimer. Pyridoxal 5'-phosphate serves as cofactor.

The protein localises to the cytoplasm. The enzyme catalyses (6R)-5,10-methylene-5,6,7,8-tetrahydrofolate + glycine + H2O = (6S)-5,6,7,8-tetrahydrofolate + L-serine. The protein operates within one-carbon metabolism; tetrahydrofolate interconversion. Its pathway is amino-acid biosynthesis; glycine biosynthesis; glycine from L-serine: step 1/1. In terms of biological role, catalyzes the reversible interconversion of serine and glycine with tetrahydrofolate (THF) serving as the one-carbon carrier. This reaction serves as the major source of one-carbon groups required for the biosynthesis of purines, thymidylate, methionine, and other important biomolecules. Also exhibits THF-independent aldolase activity toward beta-hydroxyamino acids, producing glycine and aldehydes, via a retro-aldol mechanism. The polypeptide is Serine hydroxymethyltransferase (Helicobacter pylori (strain HPAG1)).